A 282-amino-acid chain; its full sequence is Pantothenate synthetase (282 aa).

ATP is bound at residue 30 to 37 (MGNLHLGH). Histidine 37 (proton donor) is an active-site residue. Glutamine 61 is a (R)-pantoate binding site. Glutamine 61 contacts beta-alanine. 149-152 (GQKD) contacts ATP. Position 155 (glutamine 155) interacts with (R)-pantoate. ATP-binding positions include isoleucine 178 and 186-189 (MSSR).

This sequence belongs to the pantothenate synthetase family. As to quaternary structure, homodimer.

It is found in the cytoplasm. It carries out the reaction (R)-pantoate + beta-alanine + ATP = (R)-pantothenate + AMP + diphosphate + H(+). It functions in the pathway cofactor biosynthesis; (R)-pantothenate biosynthesis; (R)-pantothenate from (R)-pantoate and beta-alanine: step 1/1. In terms of biological role, catalyzes the condensation of pantoate with beta-alanine in an ATP-dependent reaction via a pantoyl-adenylate intermediate. This is Pantothenate synthetase from Shewanella piezotolerans (strain WP3 / JCM 13877).